Here is an 84-residue protein sequence, read N- to C-terminus: Large ribosomal subunit protein bL27 (84 aa).

The segment at 1 to 21 is disordered; that stretch reads MAHKKGGGSTKNGRDSNPKYL.

Belongs to the bacterial ribosomal protein bL27 family.

The chain is Large ribosomal subunit protein bL27 from Pelodictyon phaeoclathratiforme (strain DSM 5477 / BU-1).